Reading from the N-terminus, the 475-residue chain is Aspartyl/glutamyl-tRNA(Asn/Gln) amidotransferase subunit B (475 aa).

Belongs to the GatB/GatE family. GatB subfamily. Heterotrimer of A, B and C subunits.

The enzyme catalyses L-glutamyl-tRNA(Gln) + L-glutamine + ATP + H2O = L-glutaminyl-tRNA(Gln) + L-glutamate + ADP + phosphate + H(+). It catalyses the reaction L-aspartyl-tRNA(Asn) + L-glutamine + ATP + H2O = L-asparaginyl-tRNA(Asn) + L-glutamate + ADP + phosphate + 2 H(+). Functionally, allows the formation of correctly charged Asn-tRNA(Asn) or Gln-tRNA(Gln) through the transamidation of misacylated Asp-tRNA(Asn) or Glu-tRNA(Gln) in organisms which lack either or both of asparaginyl-tRNA or glutaminyl-tRNA synthetases. The reaction takes place in the presence of glutamine and ATP through an activated phospho-Asp-tRNA(Asn) or phospho-Glu-tRNA(Gln). In Bacillus anthracis (strain A0248), this protein is Aspartyl/glutamyl-tRNA(Asn/Gln) amidotransferase subunit B.